The sequence spans 207 residues: Testis-expressed protein 35 (207 aa).

Residues 43–79 (RKGMTRELKNELREVREQLTEKMEEIKQIKDIMDKDF) are a coiled coil.

In terms of tissue distribution, testis-specific. Expressed during spermatogenesis.

It is found in the nucleus. The polypeptide is Testis-expressed protein 35 (Tex35) (Mus musculus (Mouse)).